The following is a 643-amino-acid chain: Protein tramtrack, beta isoform (643 aa).

The region spanning 33 to 98 (TDVTLAVEGQ…MYRGEVSVDQ (66 aa)) is the BTB domain. Disordered stretches follow at residues 118 to 148 (EVND…PQLQ) and 171 to 300 (ANAG…GLDT). Residue K123 forms a Glycyl lysine isopeptide (Lys-Gly) (interchain with G-Cter in ubiquitin) linkage. Low complexity predominate over residues 125–145 (SPAAAAAGAGATGSESTATTP). Positions 176-187 (TPTLPVQPSLLS) are enriched in polar residues. Over residues 192 to 201 (PKRKRGRPRK) the composition is skewed to basic residues. K201 is covalently cross-linked (Glycyl lysine isopeptide (Lys-Gly) (interchain with G-Cter in ubiquitin)). Residues 254-285 (HTDDLNESRDSLPSKRSKNSKDHRVVSHHEDN) are compositionally biased toward basic and acidic residues. Residues K355, K397, K418, K457, K478, and K480 each participate in a glycyl lysine isopeptide (Lys-Gly) (interchain with G-Cter in ubiquitin) cross-link. 2 C2H2-type zinc fingers span residues 508–531 (YRCK…VTSH) and 538–561 (YPCP…KIIH). Residue K545 forms a Glycyl lysine isopeptide (Lys-Gly) (interchain with G-Cter in ubiquitin) linkage. Positions 584-643 (GVSGASTPPPPDLSGQNSNQSLPATSNALSTSSSSSTSSSSGSLGPLTTSAPPAPAAAAQ) are disordered. The segment covering 604–643 (SLPATSNALSTSSSSSTSSSSGSLGPLTTSAPPAPAAAAQ) has biased composition (low complexity).

In terms of assembly, can form homodimers. Interacts with Trl in vivo via the BTB domain. Interacts with phyl. Interacts with Usp47. Post-translationally, polyubiquitinated by sina. Polyubiquitin linkage is mainly through 'Lys-48', but linkage through 'Lys-63' also occurs. Deubiquitination by Usp47 leads to its stabilization.

It localises to the nucleus. Its function is as follows. Binds to a number of sites in the transcriptional regulatory region of ftz. Isoform beta is required to repress inappropriate segmentation gene transcription and repress genes incompatible with development of photoreceptor cell fates. Probable repressor of the transcription of the segmentation genes ftz, eve, h, odd, run, and en. Inhibits Trl-dependent activation of eve. May bind to the region AGGGC/TGG. Degradation of ttk is directed by binding of sinah or sina, via the adapter molecule phyl which binds to the BTB domain of ttk. A second method of degradation exists that is phyl-independent, this is mediated by recognition of motifs in the C-terminus of ttk. In Drosophila melanogaster (Fruit fly), this protein is Protein tramtrack, beta isoform (ttk).